Consider the following 198-residue polypeptide: (S)-2-hydroxypropylphosphonic acid epoxidase (198 aa).

The region spanning 15 to 70 (LKDRREQVKMDHAALASLLGETPETVAAWENGEGGELTLTQLGRIAHVLGTSIGAL) is the HTH cro/C1-type domain. K23 provides a ligand contact to substrate. The segment at residues 26 to 45 (HAALASLLGETPETVAAWEN) is a DNA-binding region (H-T-H motif). Residues R97, Y105, 135–138 (NSGH), and E142 contribute to the substrate site. Positions 136–196 (SGHAGNEFLF…GTGSAKLIAV (61 aa)) constitute a Cupin type-2 domain. H138, E142, and H180 together coordinate Fe cation.

The protein belongs to the non-heme iron-dependent dioxygenase family. As to quaternary structure, homotetramer. It depends on Fe(2+) as a cofactor.

It catalyses the reaction (S)-2-hydroxypropylphosphonate + H2O2 = (1R,2S)-epoxypropylphosphonate + 2 H2O. The protein operates within antibiotic biosynthesis; fosfomycin biosynthesis. In terms of biological role, non-heme-dependent dioxygenase that catalyzes the oxidative epoxidation of (S)-2-hydroxypropylphosphonate into (1R,2S)-epoxypropylphosphonate, the final step in the biosynthesis of fosfomycin antibiotic. This chain is (S)-2-hydroxypropylphosphonic acid epoxidase (hppE), found in Streptomyces wedmorensis.